Reading from the N-terminus, the 334-residue chain is Ornithine carbamoyltransferase, catabolic (334 aa).

Carbamoyl phosphate contacts are provided by residues 57-60 (STRT), Q84, R108, and 135-138 (HPTQ). L-ornithine contacts are provided by residues N168, D232, and 236-237 (SM). Residues 274–275 (CL) and R321 each bind carbamoyl phosphate.

Belongs to the aspartate/ornithine carbamoyltransferase superfamily. OTCase family.

Its subcellular location is the cytoplasm. The catalysed reaction is carbamoyl phosphate + L-ornithine = L-citrulline + phosphate + H(+). The protein operates within amino-acid degradation; L-arginine degradation via ADI pathway; carbamoyl phosphate from L-arginine: step 2/2. Reversibly catalyzes the transfer of the carbamoyl group from carbamoyl phosphate (CP) to the N(epsilon) atom of ornithine (ORN) to produce L-citrulline. The chain is Ornithine carbamoyltransferase, catabolic (arcB) from Haemophilus influenzae (strain ATCC 51907 / DSM 11121 / KW20 / Rd).